The primary structure comprises 129 residues: Small ribosomal subunit protein uS11 (129 aa).

Belongs to the universal ribosomal protein uS11 family. In terms of assembly, part of the 30S ribosomal subunit. Interacts with proteins S7 and S18. Binds to IF-3.

Located on the platform of the 30S subunit, it bridges several disparate RNA helices of the 16S rRNA. Forms part of the Shine-Dalgarno cleft in the 70S ribosome. The sequence is that of Small ribosomal subunit protein uS11 from Carboxydothermus hydrogenoformans (strain ATCC BAA-161 / DSM 6008 / Z-2901).